The following is a 338-amino-acid chain: RNA 3'-terminal phosphate cyclase (338 aa).

Residues glutamine 103 and 283–287 (YLADQ) each bind ATP. Histidine 308 functions as the Tele-AMP-histidine intermediate in the catalytic mechanism.

The protein belongs to the RNA 3'-terminal cyclase family. Type 1 subfamily.

It is found in the cytoplasm. The enzyme catalyses a 3'-end 3'-phospho-ribonucleotide-RNA + ATP = a 3'-end 2',3'-cyclophospho-ribonucleotide-RNA + AMP + diphosphate. Its function is as follows. Catalyzes the conversion of 3'-phosphate to a 2',3'-cyclic phosphodiester at the end of RNA. The mechanism of action of the enzyme occurs in 3 steps: (A) adenylation of the enzyme by ATP; (B) transfer of adenylate to an RNA-N3'P to produce RNA-N3'PP5'A; (C) and attack of the adjacent 2'-hydroxyl on the 3'-phosphorus in the diester linkage to produce the cyclic end product. The biological role of this enzyme is unknown but it is likely to function in some aspects of cellular RNA processing. This chain is RNA 3'-terminal phosphate cyclase, found in Escherichia coli O45:K1 (strain S88 / ExPEC).